A 382-amino-acid chain; its full sequence is Chaperone protein DnaJ (382 aa).

The J domain occupies 5–70 (DFYEILGVPK…QKRAAYDQYG (66 aa)). The CR-type zinc finger occupies 137–215 (GVTKEIRIPT…CHGHGRVEKT (79 aa)). Zn(2+) is bound by residues Cys-150, Cys-153, Cys-167, Cys-170, Cys-189, Cys-192, Cys-203, and Cys-206. 4 CXXCXGXG motif repeats span residues 150–157 (CDICHGSG), 167–174 (CPTCHGSG), 189–196 (CPHCHGRG), and 203–210 (CNKCHGHG).

It belongs to the DnaJ family. Homodimer. Zn(2+) serves as cofactor.

Its subcellular location is the cytoplasm. In terms of biological role, participates actively in the response to hyperosmotic and heat shock by preventing the aggregation of stress-denatured proteins and by disaggregating proteins, also in an autonomous, DnaK-independent fashion. Unfolded proteins bind initially to DnaJ; upon interaction with the DnaJ-bound protein, DnaK hydrolyzes its bound ATP, resulting in the formation of a stable complex. GrpE releases ADP from DnaK; ATP binding to DnaK triggers the release of the substrate protein, thus completing the reaction cycle. Several rounds of ATP-dependent interactions between DnaJ, DnaK and GrpE are required for fully efficient folding. Also involved, together with DnaK and GrpE, in the DNA replication of plasmids through activation of initiation proteins. The chain is Chaperone protein DnaJ from Enterobacter sp. (strain 638).